Here is a 395-residue protein sequence, read N- to C-terminus: Univin (395 aa).

A signal peptide spans 1-19; that stretch reads MDVSKVLILTLIWLLTADS. Positions 20–272 are excised as a propeptide; the sequence is APPDYVTLTR…CSKRNRRNKR (253 aa). An N-linked (GlcNAc...) asparagine glycan is attached at Asn-50. The interval 69 to 97 is disordered; that stretch reads EGAAASRGGETEIGKEEEEDGRPCSETKL. Asn-116 and Asn-336 each carry an N-linked (GlcNAc...) asparagine glycan. Cystine bridges form between Cys-294-Cys-360, Cys-323-Cys-392, and Cys-327-Cys-394.

This sequence belongs to the TGF-beta family. In terms of assembly, homodimer; disulfide-linked.

It is found in the secreted. Could have a critical role in early developmental decisions in the sea urchin embryo. In Strongylocentrotus purpuratus (Purple sea urchin), this protein is Univin.